We begin with the raw amino-acid sequence, 206 residues long: dCTP deaminase, dUMP-forming (206 aa).

Residues 117-122 (RSSFGR), aspartate 135, 143-145 (TLE), glutamine 163, tyrosine 177, lysine 184, and glutamine 188 contribute to the dCTP site. Catalysis depends on glutamate 145, which acts as the Proton donor/acceptor.

The protein belongs to the dCTP deaminase family. In terms of assembly, homotrimer.

It catalyses the reaction dCTP + 2 H2O = dUMP + NH4(+) + diphosphate. Its pathway is pyrimidine metabolism; dUMP biosynthesis; dUMP from dCTP: step 1/1. Its function is as follows. Bifunctional enzyme that catalyzes both the deamination of dCTP to dUTP and the hydrolysis of dUTP to dUMP without releasing the toxic dUTP intermediate. In Methanococcus maripaludis (strain C7 / ATCC BAA-1331), this protein is dCTP deaminase, dUMP-forming.